Reading from the N-terminus, the 233-residue chain is Pilin-like protein PilA3 (233 aa).

Positions 1-4 (MKRG) are cleaved as a propeptide — leader sequence. Phenylalanine 5 carries the N-methylphenylalanine modification. The helical transmembrane segment at 5–25 (FTLVEVLVAMAILVVVLAVGV) threads the bilayer. The tract at residues 121–143 (LRRSDVNATPSSGSDCTTPPPNS) is disordered. Polar residues predominate over residues 126–137 (VNATPSSGSDCT).

It is found in the cell inner membrane. Its subcellular location is the cell outer membrane. It localises to the periplasm. In terms of biological role, plays an essential role in natural DNA transformation but is not required for pilus biogenesis. The protein is Pilin-like protein PilA3 (pilA3) of Thermus thermophilus (strain ATCC BAA-163 / DSM 7039 / HB27).